The primary structure comprises 131 residues: DNA-directed RNA polymerase subunit omega (131 aa).

Residues 78–131 form a disordered region; that stretch reads DEPEAEAVPALSSAPDAAQSDAMGDVQFDRMTEEDLLRGLEGLVPPAATDDDGE. The span at 104–115 shows a compositional bias: basic and acidic residues; sequence QFDRMTEEDLLR.

The protein belongs to the RNA polymerase subunit omega family. The RNAP catalytic core consists of 2 alpha, 1 beta, 1 beta' and 1 omega subunit. When a sigma factor is associated with the core the holoenzyme is formed, which can initiate transcription.

The catalysed reaction is RNA(n) + a ribonucleoside 5'-triphosphate = RNA(n+1) + diphosphate. Its function is as follows. Promotes RNA polymerase assembly. Latches the N- and C-terminal regions of the beta' subunit thereby facilitating its interaction with the beta and alpha subunits. The chain is DNA-directed RNA polymerase subunit omega from Beijerinckia indica subsp. indica (strain ATCC 9039 / DSM 1715 / NCIMB 8712).